The sequence spans 130 residues: Small ribosomal subunit protein uS9 (130 aa).

The tract at residues 105 to 130 is disordered; the sequence is TRDSRMVERKKPGLKKARRASQFSKR. Positions 106 to 115 are enriched in basic and acidic residues; the sequence is RDSRMVERKK. Positions 116-130 are enriched in basic residues; the sequence is PGLKKARRASQFSKR.

The protein belongs to the universal ribosomal protein uS9 family.

The protein is Small ribosomal subunit protein uS9 of Oenococcus oeni (strain ATCC BAA-331 / PSU-1).